Here is a 95-residue protein sequence, read N- to C-terminus: Glutamyl-tRNA(Gln) amidotransferase subunit C (95 aa).

This sequence belongs to the GatC family. In terms of assembly, heterotrimer of A, B and C subunits.

It catalyses the reaction L-glutamyl-tRNA(Gln) + L-glutamine + ATP + H2O = L-glutaminyl-tRNA(Gln) + L-glutamate + ADP + phosphate + H(+). The enzyme catalyses L-aspartyl-tRNA(Asn) + L-glutamine + ATP + H2O = L-asparaginyl-tRNA(Asn) + L-glutamate + ADP + phosphate + 2 H(+). Its function is as follows. Allows the formation of correctly charged Asn-tRNA(Asn) or Gln-tRNA(Gln) through the transamidation of misacylated Asp-tRNA(Asn) or Glu-tRNA(Gln) in organisms which lack either or both of asparaginyl-tRNA or glutaminyl-tRNA synthetases. The reaction takes place in the presence of glutamine and ATP through an activated phospho-Asp-tRNA(Asn) or phospho-Glu-tRNA(Gln). This Moraxella catarrhalis (Branhamella catarrhalis) protein is Glutamyl-tRNA(Gln) amidotransferase subunit C.